We begin with the raw amino-acid sequence, 507 residues long: Aromatase (507 aa).

Residue Cys436 participates in heme binding.

This sequence belongs to the cytochrome P450 family. Requires heme as cofactor.

It is found in the membrane. It carries out the reaction testosterone + 3 reduced [NADPH--hemoprotein reductase] + 3 O2 = 17beta-estradiol + formate + 3 oxidized [NADPH--hemoprotein reductase] + 4 H2O + 4 H(+). The enzyme catalyses androst-4-ene-3,17-dione + 3 reduced [NADPH--hemoprotein reductase] + 3 O2 = estrone + formate + 3 oxidized [NADPH--hemoprotein reductase] + 4 H2O + 4 H(+). Its function is as follows. Catalyzes the formation of aromatic C18 estrogens from C19 androgens. This is Aromatase (CYP19A1) from Gallus gallus (Chicken).